Reading from the N-terminus, the 309-residue chain is Putative taste receptor type 2 member 36 (309 aa).

Position 1 (M1) is a topological domain, extracellular. The chain crosses the membrane as a helical span at residues I2 to F22. The Cytoplasmic segment spans residues S23 to Q46. The chain crosses the membrane as a helical span at residues I47 to Y67. Residues S68 to E79 are Extracellular-facing. Residues V80–T100 form a helical membrane-spanning segment. Topologically, residues S101–K126 are cytoplasmic. The helical transmembrane segment at S127 to K147 threads the bilayer. The Extracellular segment spans residues H148–T181. N161 and N176 each carry an N-linked (GlcNAc...) asparagine glycan. The helical transmembrane segment at L182–L202 threads the bilayer. The Cytoplasmic portion of the chain corresponds to C203–Q229. A helical transmembrane segment spans residues T230–C250. Residues N251–P259 lie on the Extracellular side of the membrane. The chain crosses the membrane as a helical span at residues V260–I280. Residues L281–P309 lie on the Cytoplasmic side of the membrane.

This sequence belongs to the G-protein coupled receptor T2R family.

It localises to the membrane. Functionally, putative taste receptor which may play a role in the perception of bitterness. This chain is Putative taste receptor type 2 member 36, found in Homo sapiens (Human).